Reading from the N-terminus, the 34-residue chain is Photosystem II reaction center protein M (34 aa).

Residues 5–25 (ILGLIATTLFILIPTSFLLIL) traverse the membrane as a helical segment.

The protein belongs to the PsbM family. PSII is composed of 1 copy each of membrane proteins PsbA, PsbB, PsbC, PsbD, PsbE, PsbF, PsbH, PsbI, PsbJ, PsbK, PsbL, PsbM, PsbT, PsbX, PsbY, PsbZ, Psb30/Ycf12, at least 3 peripheral proteins of the oxygen-evolving complex and a large number of cofactors. It forms dimeric complexes.

The protein localises to the plastid. Its subcellular location is the chloroplast thylakoid membrane. One of the components of the core complex of photosystem II (PSII). PSII is a light-driven water:plastoquinone oxidoreductase that uses light energy to abstract electrons from H(2)O, generating O(2) and a proton gradient subsequently used for ATP formation. It consists of a core antenna complex that captures photons, and an electron transfer chain that converts photonic excitation into a charge separation. This subunit is found at the monomer-monomer interface. This is Photosystem II reaction center protein M from Pleurastrum terricola (Filamentous green alga).